The primary structure comprises 156 residues: 6,7-dimethyl-8-ribityllumazine synthase (156 aa).

5-amino-6-(D-ribitylamino)uracil is bound by residues Phe22, 57–59 (AVE), and 81–83 (SVI). 86–87 (GT) lines the (2S)-2-hydroxy-3-oxobutyl phosphate pocket. His89 acts as the Proton donor in catalysis. Position 114 (Phe114) interacts with 5-amino-6-(D-ribitylamino)uracil. Arg128 provides a ligand contact to (2S)-2-hydroxy-3-oxobutyl phosphate.

The protein belongs to the DMRL synthase family. Forms an icosahedral capsid composed of 60 subunits, arranged as a dodecamer of pentamers.

It carries out the reaction (2S)-2-hydroxy-3-oxobutyl phosphate + 5-amino-6-(D-ribitylamino)uracil = 6,7-dimethyl-8-(1-D-ribityl)lumazine + phosphate + 2 H2O + H(+). The protein operates within cofactor biosynthesis; riboflavin biosynthesis; riboflavin from 2-hydroxy-3-oxobutyl phosphate and 5-amino-6-(D-ribitylamino)uracil: step 1/2. Its function is as follows. Catalyzes the formation of 6,7-dimethyl-8-ribityllumazine by condensation of 5-amino-6-(D-ribitylamino)uracil with 3,4-dihydroxy-2-butanone 4-phosphate. This is the penultimate step in the biosynthesis of riboflavin. The sequence is that of 6,7-dimethyl-8-ribityllumazine synthase from Aliivibrio fischeri (strain ATCC 700601 / ES114) (Vibrio fischeri).